Reading from the N-terminus, the 82-residue chain is Acyl carrier protein (82 aa).

In terms of domain architecture, Carrier spans 3 to 78; the sequence is QEIFERVKKV…KAVEHISEKV (76 aa). Ser-38 carries the O-(pantetheine 4'-phosphoryl)serine modification.

It belongs to the acyl carrier protein (ACP) family. Post-translationally, 4'-phosphopantetheine is transferred from CoA to a specific serine of apo-ACP by AcpS. This modification is essential for activity because fatty acids are bound in thioester linkage to the sulfhydryl of the prosthetic group.

It localises to the cytoplasm. It participates in lipid metabolism; fatty acid biosynthesis. In terms of biological role, carrier of the growing fatty acid chain in fatty acid biosynthesis. This Gloeothece citriformis (strain PCC 7424) (Cyanothece sp. (strain PCC 7424)) protein is Acyl carrier protein.